Reading from the N-terminus, the 583-residue chain is cAMP-dependent protein kinase catalytic subunit 3 (583 aa).

Disordered stretches follow at residues Ala51–Lys75 and Ser98–Lys264. Polar residues-rich tracts occupy residues Thr52–Pro69 and Ser98–Leu107. The segment covering Thr108–Ser162 has biased composition (low complexity). The segment covering Asp163–Gln176 has biased composition (acidic residues). The segment covering Pro181–Ser200 has biased composition (low complexity). Residues Asn205–Gly219 show a composition bias toward acidic residues. A compositionally biased stretch (basic and acidic residues) spans Gly221–Ser234. Acidic residues predominate over residues Glu235–Glu256. Residues Tyr274–Phe528 form the Protein kinase domain. Residues Val280–Val288 and Lys303 each bind ATP. Catalysis depends on Asp397, which acts as the Proton acceptor. Positions Lys529–Phe583 constitute an AGC-kinase C-terminal domain.

It belongs to the protein kinase superfamily. AGC Ser/Thr protein kinase family. cAMP subfamily. Expressed in embryonic mesoderm, and the optic lamina, wing disk and leg disks of third instar larvae. More abundant in adult head than adult body.

It carries out the reaction L-seryl-[protein] + ATP = O-phospho-L-seryl-[protein] + ADP + H(+). It catalyses the reaction L-threonyl-[protein] + ATP = O-phospho-L-threonyl-[protein] + ADP + H(+). Its function is as follows. Does not have an essential role in development. This chain is cAMP-dependent protein kinase catalytic subunit 3 (Pka-C3), found in Drosophila melanogaster (Fruit fly).